We begin with the raw amino-acid sequence, 304 residues long: 1D-myo-inositol 2-acetamido-2-deoxy-alpha-D-glucopyranoside deacetylase 2 (304 aa).

Zn(2+) is bound by residues His-17, Asp-20, and His-152.

The protein belongs to the MshB deacetylase family. It depends on Zn(2+) as a cofactor.

The catalysed reaction is 1D-myo-inositol 2-acetamido-2-deoxy-alpha-D-glucopyranoside + H2O = 1D-myo-inositol 2-amino-2-deoxy-alpha-D-glucopyranoside + acetate. Its function is as follows. Catalyzes the deacetylation of 1D-myo-inositol 2-acetamido-2-deoxy-alpha-D-glucopyranoside (GlcNAc-Ins) in the mycothiol biosynthesis pathway. The protein is 1D-myo-inositol 2-acetamido-2-deoxy-alpha-D-glucopyranoside deacetylase 2 of Catenulispora acidiphila (strain DSM 44928 / JCM 14897 / NBRC 102108 / NRRL B-24433 / ID139908).